The primary structure comprises 218 residues: Probable nicotinate-nucleotide adenylyltransferase (218 aa).

The protein belongs to the NadD family.

It catalyses the reaction nicotinate beta-D-ribonucleotide + ATP + H(+) = deamido-NAD(+) + diphosphate. It functions in the pathway cofactor biosynthesis; NAD(+) biosynthesis; deamido-NAD(+) from nicotinate D-ribonucleotide: step 1/1. Catalyzes the reversible adenylation of nicotinate mononucleotide (NaMN) to nicotinic acid adenine dinucleotide (NaAD). The sequence is that of Probable nicotinate-nucleotide adenylyltransferase from Sodalis glossinidius (strain morsitans).